A 178-amino-acid chain; its full sequence is uncharacterized protein (178 aa).

The first 19 residues, 1–19 (MKKNIHILGASGVGTSTLG), serve as a signal peptide directing secretion.

This is an uncharacterized protein from Bacillus subtilis (strain 168).